A 299-amino-acid chain; its full sequence is ATP phosphoribosyltransferase (299 aa).

This sequence belongs to the ATP phosphoribosyltransferase family. Long subfamily. Requires Mg(2+) as cofactor.

The protein localises to the cytoplasm. It catalyses the reaction 1-(5-phospho-beta-D-ribosyl)-ATP + diphosphate = 5-phospho-alpha-D-ribose 1-diphosphate + ATP. The protein operates within amino-acid biosynthesis; L-histidine biosynthesis; L-histidine from 5-phospho-alpha-D-ribose 1-diphosphate: step 1/9. Feedback inhibited by histidine. Functionally, catalyzes the condensation of ATP and 5-phosphoribose 1-diphosphate to form N'-(5'-phosphoribosyl)-ATP (PR-ATP). Has a crucial role in the pathway because the rate of histidine biosynthesis seems to be controlled primarily by regulation of HisG enzymatic activity. This is ATP phosphoribosyltransferase from Shewanella loihica (strain ATCC BAA-1088 / PV-4).